Reading from the N-terminus, the 205-residue chain is Ribosomal RNA small subunit methyltransferase G (205 aa).

S-adenosyl-L-methionine is bound by residues Gly71, Phe76, 120–121, and Arg134; that span reads IE.

The protein belongs to the methyltransferase superfamily. RNA methyltransferase RsmG family.

Its subcellular location is the cytoplasm. The enzyme catalyses guanosine(527) in 16S rRNA + S-adenosyl-L-methionine = N(7)-methylguanosine(527) in 16S rRNA + S-adenosyl-L-homocysteine. Functionally, specifically methylates the N7 position of guanine in position 527 of 16S rRNA. The polypeptide is Ribosomal RNA small subunit methyltransferase G (Paramagnetospirillum magneticum (strain ATCC 700264 / AMB-1) (Magnetospirillum magneticum)).